A 467-amino-acid polypeptide reads, in one-letter code: ATP synthase subunit beta (467 aa).

Position 150–157 (150–157 (GGAGVGKT)) interacts with ATP.

Belongs to the ATPase alpha/beta chains family. As to quaternary structure, F-type ATPases have 2 components, CF(1) - the catalytic core - and CF(0) - the membrane proton channel. CF(1) has five subunits: alpha(3), beta(3), gamma(1), delta(1), epsilon(1). CF(0) has three main subunits: a(1), b(2) and c(9-12). The alpha and beta chains form an alternating ring which encloses part of the gamma chain. CF(1) is attached to CF(0) by a central stalk formed by the gamma and epsilon chains, while a peripheral stalk is formed by the delta and b chains.

It is found in the cell inner membrane. It catalyses the reaction ATP + H2O + 4 H(+)(in) = ADP + phosphate + 5 H(+)(out). Produces ATP from ADP in the presence of a proton gradient across the membrane. The catalytic sites are hosted primarily by the beta subunits. This chain is ATP synthase subunit beta, found in Vibrio vulnificus (strain YJ016).